Reading from the N-terminus, the 311-residue chain is uncharacterized protein (311 aa).

Residues 168 to 188 (FNVMKGAILGLPIIGGIIVGV) traverse the membrane as a helical segment.

The protein localises to the cell membrane. This is an uncharacterized protein from Edwardsiella tarda.